The sequence spans 502 residues: MSLWRSNEATVYLPPVSVSKVVSTDEYVTRTNIYYHAGSSRLLAVGHPYYAIKKQDSNKIAVPKVSGLQYRVFRVKLPDPNKFGFPDTSFYDPASQRLVWACTGVEVGRGQPLGVGISGHPLLNKLDDTENSNKYVGNSGTDNRECISMDYKQTQLCLIGCRPPIGEHWGKGTPCNANQVKAGECPPLELLNTVLQDGDMVDTGFGAMDFTTLQANKSDVPLDICSSICKYPDYLKMVSEPYGDMLFFYLRREQMFVRHLFNRAGTVGETVPADLYIKGTTGTLPSTSYFPTPSGSMVTSDAQIFNKPYWLQRAQGHNNGICWSNQLFVTVVDTTRSTNMSVCSAVSSSDSTYKNDNFKEYLRHGEEYDLQFIFQLCKITLTADVMTYIHSMNPSILEDWNFGLTPPPSGTLEDTYRYVTSQAVTCQKPSAPKPKDDPLKNYTFWEVDLKEKFSADLDQFPLGRKFLLQAGLKARPNFRLGKRAAPASTSKKSSTKRRKVKS.

The tract at residues 479–502 is disordered; it reads RLGKRAAPASTSKKSSTKRRKVKS. A compositionally biased stretch (basic residues) spans 493–502; that stretch reads SSTKRRKVKS.

This sequence belongs to the papillomaviridae L1 protein family. Self-assembles into homopentamers. The capsid has an icosahedral symmetry and consists of 72 capsomers, with each capsomer being a pentamer of L1. Interacts with the minor capsid protein L2; this interaction is necessary for viral genome encapsidation. Interacts with protein E2; this interaction enhances E2-dependent replication and transcription activation.

It localises to the virion. Its subcellular location is the host nucleus. Forms an icosahedral capsid with a T=7 symmetry and a 50 nm diameter. The capsid is composed of 72 pentamers linked to each other by disulfide bonds and associated with L2 proteins. Binds to heparan sulfate proteoglycans on cell surface of basal layer keratinocytes to provide initial virion attachment. This binding mediates a conformational change in the virus capsid that facilitates efficient infection. The virion enters the host cell via endocytosis. During virus trafficking, L1 protein dissociates from the viral DNA and the genomic DNA is released to the host nucleus. The virion assembly takes place within the cell nucleus. Encapsulates the genomic DNA together with protein L2. This chain is Major capsid protein L1, found in Homo sapiens (Human).